Here is a 379-residue protein sequence, read N- to C-terminus: F-box protein At1g67340 (379 aa).

Residues 41–92 (ADLLDSIPDDLVISILCKLGSTSRCPADFINVLLTCKRLKGLAMNPIVLSRL) form the F-box domain. Zn(2+)-binding residues include His304, Cys307, Cys320, Cys323, Cys329, Cys333, His342, and Cys346. The MYND-type; atypical zinc-finger motif lies at 304-346 (HAGCGRPETRKHEFRRCSVCGVVNYCSRACQALDWKLRHKMDC). The disordered stretch occupies residues 358–379 (GGEGNVQIDGNGNGDNVLLPMS).

Part of a SCF (ASK-cullin-F-box) protein ligase complex. Interacts with SKP1A/ASK1, SKP1B/ASK2, ASK4, ASK11 and ASK13.

The protein localises to the nucleus. It functions in the pathway protein modification; protein ubiquitination. In terms of biological role, component of SCF(ASK-cullin-F-box) E3 ubiquitin ligase complexes, which may mediate the ubiquitination and subsequent proteasomal degradation of target proteins. This Arabidopsis thaliana (Mouse-ear cress) protein is F-box protein At1g67340.